The primary structure comprises 334 residues: Terpene synthase 1 (334 aa).

Positions 82 and 86 each coordinate Mg(2+). Positions 82 to 86 (DDIFD) match the D(D/E)XX(D/E) motif motif. Arg184 is a binding site for substrate. Asn230, Ser234, and Glu238 together coordinate Mg(2+). The NSE motif signature appears at 230–238 (NDIYSYHRE). The WxxxxxRY motif motif lies at 309–316 (WSESCTRY).

It belongs to the terpene synthase family. Mg(2+) is required as a cofactor.

The catalysed reaction is (2E,6E)-farnesyl diphosphate = gamma-muurolene + diphosphate. It catalyses the reaction (2E,6E)-farnesyl diphosphate = alpha-muurolene + diphosphate. It carries out the reaction (2E,6E)-farnesyl diphosphate = (-)-(E)-beta-caryophyllene + diphosphate. The enzyme catalyses (2E)-geranyl diphosphate = beta-myrcene + diphosphate. In terms of biological role, terpene synthase that catalyzes the cyclization of farnesyl diphosphate (FPP) into a mixture of sesquiterpenes with gamma-muurolene as the most abundant compound and (-)-beta-caryophyllene, alpha-muurolene, and 4 unidentified sesquiterpenes as minor compoundss. TPS1 also shows monoterpene synthase activity and can also use geranyl diphosphate (GPP) as a substrate to convert it into a mixture of cyclic and acyclic monoterpenes, including myrcene and linalool. P.polycephalum has a unique biology and these volatile terpenoids could function in internal communication of P.polycephalum, to mark the territory that have been explored, or they may be involved in chemotaxis. This is Terpene synthase 1 from Physarum polycephalum (Slime mold).